Consider the following 524-residue polypeptide: Glycoprotein (524 aa).

The signal sequence occupies residues 1–19 (MVPQVLLFAPLLVFPLCFG). Over 20–459 (KFPIYTIPDK…DLGLPKWGKY (440 aa)) the chain is Virion surface. Intrachain disulfides connect Cys-43-Cys-302, Cys-54-Cys-226, Cys-80-Cys-113, Cys-178-Cys-188, Cys-208-Cys-247, and Cys-242-Cys-271. N-linked (GlcNAc...) asparagine; by host glycosylation occurs at Asn-56. Asn-177 is a glycosylation site (N-linked (GlcNAc...) asparagine; by host). N-linked (GlcNAc...) asparagine; by host glycosylation is present at Asn-338. A disulfide bridge connects residues Cys-363 and Cys-370. Residues 460–480 (VLMIAGALIALMLIIFLMTCC) traverse the membrane as a helical segment. Residue Cys-480 is the site of S-palmitoyl cysteine; by host attachment. The Intravirion segment spans residues 481 to 524 (RRVNRPESTQSNLGGTGRNVSVPSQSGKVISSWESYKSGGETRL). The segment at 487-506 (ESTQSNLGGTGRNVSVPSQS) is disordered.

Belongs to the lyssavirus glycoprotein family. As to quaternary structure, homotrimer. Interacts with matrix protein. Interacts with host TRFC. Interacts with host BST2; this interaction inhibits viral budding by tethering new virions to the cell surface. Interacts with ITGB1. Interacts with host GRM2. In terms of processing, glycosylated and palmitoylated by host. Glycosylation is crucial for glycoprotein export at the cell surface.

It is found in the virion membrane. Its function is as follows. Attaches the virus to host cellular receptor, inducing endocytosis of the virion by using different host proteins including TFRC, GRM2 and ITGB1. In the endosome, the acidic pH induces conformational changes in the glycoprotein trimer, which trigger fusion between virus and cell membrane. There is convincing in vitro evidence that the muscular form of the nicotinic acetylcholine receptor (nAChR), the neuronal cell adhesion molecule (NCAM), and the p75 neurotrophin receptor (p75NTR) bind glycoprotein and thereby facilitate rabies virus entry into cells. This Homo sapiens (Human) protein is Glycoprotein (G).